The chain runs to 147 residues: Putative fibroblast growth factor 1 (147 aa).

Residue N25 participates in heparin binding. Residues 117–133 (KKNGKMKRGPRTHIGQK) are heparin-binding.

Belongs to the heparin-binding growth factors family.

It is found in the secreted. It localises to the cytoplasm. The protein localises to the cell cortex. Its subcellular location is the cytosol. The protein resides in the nucleus. Functionally, plays an important role in the regulation of cell survival, cell division, angiogenesis, cell differentiation and cell migration. Functions as a potent mitogen in vitro. Acts as a ligand for FGFR1 and integrins. Binds to FGFR1 in the presence of heparin leading to FGFR1 dimerization and activation via sequential autophosphorylation on tyrosine residues which act as docking sites for interacting proteins, leading to the activation of several signaling cascades. Binds to integrins. Its binding to integrins and subsequent ternary complex formation with integrins and FGFR1 are essential for FGF1 signaling. This Danio rerio (Zebrafish) protein is Putative fibroblast growth factor 1 (fgf1).